A 279-amino-acid polypeptide reads, in one-letter code: Very long chain fatty acid elongase 1 (279 aa).

Methionine 1 is subject to N-acetylmethionine. Helical transmembrane passes span proline 23–leucine 43, phenylalanine 61–leucine 81, valine 110–leucine 130, valine 137–tryptophan 154, valine 176–tryptophan 196, methionine 201–phenylalanine 221, and valine 231–tryptophan 251. The Di-lysine motif motif lies at lysine 275–asparagine 279.

The protein belongs to the ELO family. ELOVL1 subfamily. As to quaternary structure, interacts with LASS2 and HSD17B12. Interacts with TECR. Ubiquitous.

The protein resides in the endoplasmic reticulum membrane. It catalyses the reaction a very-long-chain acyl-CoA + malonyl-CoA + H(+) = a very-long-chain 3-oxoacyl-CoA + CO2 + CoA. It carries out the reaction eicosanoyl-CoA + malonyl-CoA + H(+) = 3-oxodocosanoyl-CoA + CO2 + CoA. The enzyme catalyses (11Z)-eicosenoyl-CoA + malonyl-CoA + H(+) = 3-oxo-(13Z)-docosenoyl-CoA + CO2 + CoA. The catalysed reaction is docosanoyl-CoA + malonyl-CoA + H(+) = 3-oxotetracosanoyl-CoA + CO2 + CoA. It catalyses the reaction (13Z)-docosenoyl-CoA + malonyl-CoA + H(+) = 3-oxo-(15Z)-tetracosenoyl-CoA + CO2 + CoA. It carries out the reaction tetracosanoyl-CoA + malonyl-CoA + H(+) = 3-oxohexacosanoyl-CoA + CO2 + CoA. The enzyme catalyses hexacosanoyl-CoA + malonyl-CoA + H(+) = 3-oxooctacosanyol-CoA + CO2 + CoA. The catalysed reaction is octadecanoyl-CoA + malonyl-CoA + H(+) = 3-oxoeicosanoyl-CoA + CO2 + CoA. It participates in lipid metabolism; fatty acid biosynthesis. Its function is as follows. Catalyzes the first and rate-limiting reaction of the four reactions that constitute the long-chain fatty acids elongation cycle. This endoplasmic reticulum-bound enzymatic process allows the addition of 2 carbons to the chain of long- and very long-chain fatty acids (VLCFAs) per cycle. Condensing enzyme that exhibits activity toward saturated and monounsaturated acyl-CoA substrates, with the highest activity towards C22:0 acyl-CoA. May participate in the production of both saturated and monounsaturated VLCFAs of different chain lengths that are involved in multiple biological processes as precursors of membrane lipids and lipid mediators. Important for saturated C24:0 and monounsaturated C24:1 sphingolipid synthesis. Indirectly inhibits RPE65 via production of VLCFAs. The polypeptide is Very long chain fatty acid elongase 1 (Homo sapiens (Human)).